A 165-amino-acid polypeptide reads, in one-letter code: PTS system glucose-specific EIIA component (165 aa).

Residues 33-137 (DPVFAGRMMG…STITPIVITN (105 aa)) form the PTS EIIA type-1 domain. His-70 and His-85 together coordinate Zn(2+). His-85 functions as the Tele-phosphohistidine intermediate; for EIIA activity in the catalytic mechanism. The residue at position 85 (His-85) is a Phosphohistidine; by HPr.

Heterodimer with glycerol kinase (glpk). Requires Zn(2+) as cofactor.

Its subcellular location is the cytoplasm. The phosphoenolpyruvate-dependent sugar phosphotransferase system (sugar PTS), a major carbohydrate active transport system, catalyzes the phosphorylation of incoming sugar substrates concomitantly with their translocation across the cell membrane. The enzyme II complex composed of PtsG and Crr is involved in glucose transport. This chain is PTS system glucose-specific EIIA component (crr), found in Bacillus anthracis.